The sequence spans 436 residues: 3-ketoacyl-CoA thiolase (436 aa).

The active-site Acyl-thioester intermediate is Cys99. Residues His392 and Cys422 each act as proton acceptor in the active site.

The protein belongs to the thiolase-like superfamily. Thiolase family. As to quaternary structure, heterotetramer of two alpha chains (FadJ) and two beta chains (FadI).

It localises to the cytoplasm. It catalyses the reaction an acyl-CoA + acetyl-CoA = a 3-oxoacyl-CoA + CoA. It functions in the pathway lipid metabolism; fatty acid beta-oxidation. Functionally, catalyzes the final step of fatty acid oxidation in which acetyl-CoA is released and the CoA ester of a fatty acid two carbons shorter is formed. This is 3-ketoacyl-CoA thiolase from Salmonella paratyphi A (strain AKU_12601).